Consider the following 419-residue polypeptide: Enolase (419 aa).

Position 160 (Gln160) interacts with (2R)-2-phosphoglycerate. Glu204 serves as the catalytic Proton donor. Residues Asp240, Glu283, and Asp309 each coordinate Mg(2+). The (2R)-2-phosphoglycerate site is built by Lys334, Arg363, Ser364, and Lys385. Residue Lys334 is the Proton acceptor of the active site.

This sequence belongs to the enolase family. Mg(2+) is required as a cofactor.

It localises to the cytoplasm. It is found in the secreted. Its subcellular location is the cell surface. The catalysed reaction is (2R)-2-phosphoglycerate = phosphoenolpyruvate + H2O. It functions in the pathway carbohydrate degradation; glycolysis; pyruvate from D-glyceraldehyde 3-phosphate: step 4/5. In terms of biological role, catalyzes the reversible conversion of 2-phosphoglycerate (2-PG) into phosphoenolpyruvate (PEP). It is essential for the degradation of carbohydrates via glycolysis. This Pyrobaculum aerophilum (strain ATCC 51768 / DSM 7523 / JCM 9630 / CIP 104966 / NBRC 100827 / IM2) protein is Enolase.